The chain runs to 1260 residues: Methionine synthase (1260 aa).

The Hcy-binding domain maps to 13-333 (FGIIRKILSE…DHIRAFCNAI (321 aa)). Residues Cys-255, Cys-318, and Cys-319 each coordinate Zn(2+). One can recognise a Pterin-binding domain in the interval 364–625 (FVNVGERCNV…IPKDLLKLVE (262 aa)). A B12-binding N-terminal domain is found at 655 to 749 (EVEEWRNKPV…FMEEEKRLKR (95 aa)). Residues Glu-699, 775–779 (GDVHD), His-778, Ser-823, Thr-827, and Ala-879 contribute to the methylcob(III)alamin site. Positions 766 to 883 (GVVVLATVKG…VHVLDASRSV (118 aa)) constitute a B12-binding domain. The 341-residue stretch at 916-1256 (SLKDRKYTSL…LSSILSYDRL (341 aa)) folds into the AdoMet activation domain. S-adenosyl-L-methionine contacts are provided by residues Asp-966, Arg-1163, and 1218-1219 (YF).

This sequence belongs to the vitamin-B12 dependent methionine synthase family. Methylcob(III)alamin is required as a cofactor. The cofactor is Zn(2+).

The enzyme catalyses (6S)-5-methyl-5,6,7,8-tetrahydrofolate + L-homocysteine = (6S)-5,6,7,8-tetrahydrofolate + L-methionine. Its pathway is amino-acid biosynthesis; L-methionine biosynthesis via de novo pathway; L-methionine from L-homocysteine (MetH route): step 1/1. Catalyzes the transfer of a methyl group from methyl-cobalamin to homocysteine, yielding enzyme-bound cob(I)alamin and methionine. Subsequently, remethylates the cofactor using methyltetrahydrofolate. This is Methionine synthase (mtr) from Dictyostelium discoideum (Social amoeba).